We begin with the raw amino-acid sequence, 44 residues long: MRDLKTYLSVAPVLSTLWFGSLAGLLIEINRLFPDALTFPFFSF.

The chain crosses the membrane as a helical span at residues 7-27 (YLSVAPVLSTLWFGSLAGLLI).

It belongs to the PsaJ family.

It is found in the plastid. The protein localises to the chloroplast thylakoid membrane. In terms of biological role, may help in the organization of the PsaE and PsaF subunits. The chain is Photosystem I reaction center subunit IX from Arabis hirsuta (Hairy rock-cress).